A 378-amino-acid chain; its full sequence is MKHSVHFGAGNIGRGFIGEILFKNGFHIDFVDVNNQIIHALNEKGKYEIEIAQKGQSRIEVTNVAGINSKEHPEQVIEAIQKTDIITTAIGPNILPFIAELLAKGIEARRVAGNTQVLDVMACENMIGGSQFLYQEVKKYLSPEGLTFADNYIGFPNAAVDRIVPAQSHEDSLFVVVEPFNEWVVETKRLKNPDLRLKDVHYEEDLEPFIERKLFSVNSGHATSAYIGAHYGAKTILEALQNPNIKSRIESVLAEIRSLLIAKWNFDKKELENYHKVIIERFENPFIVDEVSRVARTPIRKLGYNERFIRPIRELKELSLSYKNLLKTVGYAFDYRDVNDEESIRLGELLAKQSVKDVVIQVTGLDDQELIEQIVEYI.

Position 4-15 (4-15 (SVHFGAGNIGRG)) interacts with NAD(+).

This sequence belongs to the mannitol dehydrogenase family.

The enzyme catalyses D-mannitol 1-phosphate + NAD(+) = beta-D-fructose 6-phosphate + NADH + H(+). The polypeptide is Mannitol-1-phosphate 5-dehydrogenase (Streptococcus pneumoniae (strain CGSP14)).